The primary structure comprises 363 residues: Phospho-N-acetylmuramoyl-pentapeptide-transferase (363 aa).

The next 10 helical transmembrane spans lie at 27-47, 76-96, 97-117, 137-157, 171-191, 202-222, 242-262, 265-285, 292-312, and 340-360; these read SGCA…PFIA, TMGG…WADL, TNGF…VGFA, LGCE…LTPP, VLLP…TGFG, GLAI…SYLV, LAVF…FNAP, AVFM…AVAV, VLCI…IQIF, and KIVI…LATL.

The protein belongs to the glycosyltransferase 4 family. MraY subfamily. Mg(2+) serves as cofactor.

The protein resides in the cell inner membrane. The enzyme catalyses UDP-N-acetyl-alpha-D-muramoyl-L-alanyl-gamma-D-glutamyl-meso-2,6-diaminopimeloyl-D-alanyl-D-alanine + di-trans,octa-cis-undecaprenyl phosphate = di-trans,octa-cis-undecaprenyl diphospho-N-acetyl-alpha-D-muramoyl-L-alanyl-D-glutamyl-meso-2,6-diaminopimeloyl-D-alanyl-D-alanine + UMP. It functions in the pathway cell wall biogenesis; peptidoglycan biosynthesis. Functionally, catalyzes the initial step of the lipid cycle reactions in the biosynthesis of the cell wall peptidoglycan: transfers peptidoglycan precursor phospho-MurNAc-pentapeptide from UDP-MurNAc-pentapeptide onto the lipid carrier undecaprenyl phosphate, yielding undecaprenyl-pyrophosphoryl-MurNAc-pentapeptide, known as lipid I. The polypeptide is Phospho-N-acetylmuramoyl-pentapeptide-transferase (Gluconobacter oxydans (strain 621H) (Gluconobacter suboxydans)).